The chain runs to 501 residues: Tegument protein US24 (501 aa).

This sequence belongs to the herpesviridae US22 family.

It localises to the virion tegument. The polypeptide is Tegument protein US24 (US24) (Human cytomegalovirus (strain AD169) (HHV-5)).